A 318-amino-acid polypeptide reads, in one-letter code: NADH-ubiquinone oxidoreductase chain 1 (318 aa).

8 helical membrane passes run 2–22 (FFIN…FLTL), 70–90 (LFII…VPLP), 100–120 (LGIL…LWSG), 136–156 (VAQT…VLLM), 171–191 (HMWL…STLA), 231–251 (IILM…YINL), 253–273 (ELYS…FLWI), and 293–313 (FLPL…FTAG).

It belongs to the complex I subunit 1 family. Core subunit of respiratory chain NADH dehydrogenase (Complex I) which is composed of 45 different subunits.

The protein localises to the mitochondrion inner membrane. It carries out the reaction a ubiquinone + NADH + 5 H(+)(in) = a ubiquinol + NAD(+) + 4 H(+)(out). Its function is as follows. Core subunit of the mitochondrial membrane respiratory chain NADH dehydrogenase (Complex I) which catalyzes electron transfer from NADH through the respiratory chain, using ubiquinone as an electron acceptor. Essential for the catalytic activity and assembly of complex I. This Mus musculus (Mouse) protein is NADH-ubiquinone oxidoreductase chain 1 (Mtnd1).